The sequence spans 492 residues: Probable cobyric acid synthase (492 aa).

The region spanning 248–434 (PVRIAVVRLP…MHGLFQNPGA (187 aa)) is the GATase cobBQ-type domain. The active-site Nucleophile is Cys-327. The active site involves His-426.

This sequence belongs to the CobB/CobQ family. CobQ subfamily.

The protein operates within cofactor biosynthesis; adenosylcobalamin biosynthesis. Its function is as follows. Catalyzes amidations at positions B, D, E, and G on adenosylcobyrinic A,C-diamide. NH(2) groups are provided by glutamine, and one molecule of ATP is hydrogenolyzed for each amidation. This is Probable cobyric acid synthase from Methanoculleus marisnigri (strain ATCC 35101 / DSM 1498 / JR1).